The following is a 181-amino-acid chain: HGPRTase-like protein 1 (181 aa).

The protein belongs to the purine/pyrimidine phosphoribosyltransferase family. Archaeal HPRT subfamily.

In terms of biological role, may catalyze a purine salvage reaction, the substrate is unknown. The sequence is that of HGPRTase-like protein 1 from Halalkalicoccus jeotgali (strain DSM 18796 / CECT 7217 / JCM 14584 / KCTC 4019 / B3).